The chain runs to 404 residues: Formate-dependent phosphoribosylglycinamide formyltransferase (404 aa).

N(1)-(5-phospho-beta-D-ribosyl)glycinamide contacts are provided by residues 25 to 26 (EL) and Glu85. ATP contacts are provided by residues Arg118, Lys159, 164–169 (SSGKGQ), 199–202 (EGFI), and Glu207. Positions 123-318 (RLAAEELGLA…EFELHARAIL (196 aa)) constitute an ATP-grasp domain. Residues Glu277 and Glu289 each contribute to the Mg(2+) site. Residues Asp296, Lys365, and 372 to 373 (RR) each bind N(1)-(5-phospho-beta-D-ribosyl)glycinamide.

This sequence belongs to the PurK/PurT family. In terms of assembly, homodimer.

The enzyme catalyses N(1)-(5-phospho-beta-D-ribosyl)glycinamide + formate + ATP = N(2)-formyl-N(1)-(5-phospho-beta-D-ribosyl)glycinamide + ADP + phosphate + H(+). It functions in the pathway purine metabolism; IMP biosynthesis via de novo pathway; N(2)-formyl-N(1)-(5-phospho-D-ribosyl)glycinamide from N(1)-(5-phospho-D-ribosyl)glycinamide (formate route): step 1/1. In terms of biological role, involved in the de novo purine biosynthesis. Catalyzes the transfer of formate to 5-phospho-ribosyl-glycinamide (GAR), producing 5-phospho-ribosyl-N-formylglycinamide (FGAR). Formate is provided by PurU via hydrolysis of 10-formyl-tetrahydrofolate. The protein is Formate-dependent phosphoribosylglycinamide formyltransferase of Burkholderia vietnamiensis (strain G4 / LMG 22486) (Burkholderia cepacia (strain R1808)).